The chain runs to 485 residues: CUGBP Elav-like family member 5 (485 aa).

Basic and acidic residues predominate over residues 1 to 11; that stretch reads MARLTESEARR. The segment at 1–40 is disordered; the sequence is MARLTESEARRQQQQLLQPRPSPVGSSGPEPPGGQPDGMK. A compositionally biased stretch (low complexity) spans 12–28; the sequence is QQQQLLQPRPSPVGSSG. 3 consecutive RRM domains span residues 45–126, 134–214, and 400–478; these read IKLF…PADS, RKLF…FADT, and CNLF…LKRP.

This sequence belongs to the CELF/BRUNOL family. As to expression, expressed in brain.

It is found in the nucleus. The protein localises to the cytoplasm. Its function is as follows. RNA-binding protein implicated in the regulation of pre-mRNA alternative splicing. Mediates exon inclusion and/or exclusion in pre-mRNA that are subject to tissue-specific and developmentally regulated alternative splicing. Specifically activates exon 5 inclusion of cardiac isoforms of TNNT2 during heart remodeling at the juvenile to adult transition. Binds to muscle-specific splicing enhancer (MSE) intronic sites flanking the alternative exon 5 of TNNT2 pre-mRNA. This Homo sapiens (Human) protein is CUGBP Elav-like family member 5 (CELF5).